Consider the following 61-residue polypeptide: MKKLKITLVKSPIGYKYDQKDTVKRLGLRKLNSTVIKDDVPQIRGMIRKVRHLVKVEEIEE.

This sequence belongs to the universal ribosomal protein uL30 family. As to quaternary structure, part of the 50S ribosomal subunit.

This Thermosipho africanus (strain TCF52B) protein is Large ribosomal subunit protein uL30.